Here is a 330-residue protein sequence, read N- to C-terminus: tRNA U34 carboxymethyltransferase (330 aa).

Residues K91, W105, K110, G130, 152–154, 181–182, M196, Y200, and R315 each bind carboxy-S-adenosyl-L-methionine; these read DPS and IE.

Belongs to the class I-like SAM-binding methyltransferase superfamily. CmoB family. In terms of assembly, homotetramer.

It catalyses the reaction carboxy-S-adenosyl-L-methionine + 5-hydroxyuridine(34) in tRNA = 5-carboxymethoxyuridine(34) in tRNA + S-adenosyl-L-homocysteine + H(+). Functionally, catalyzes carboxymethyl transfer from carboxy-S-adenosyl-L-methionine (Cx-SAM) to 5-hydroxyuridine (ho5U) to form 5-carboxymethoxyuridine (cmo5U) at position 34 in tRNAs. The protein is tRNA U34 carboxymethyltransferase of Shewanella pealeana (strain ATCC 700345 / ANG-SQ1).